The primary structure comprises 368 residues: MSETAKKVIVGMSGGVDSSVSAWLLQQQGYQVEGLFMKNWEEDDGEEYCTAAADLADAQAVCDKLGIELHTVNFAAEYWDNVFELFLAEYKAGRTPNPDILCNKEIKFKAFLEFAAEDLGADYIATGHYVRRADVDGKSRLLRGLDSNKDQSYFLYTLSHEQIAQSLFPVGELEKPQVRKIAEDLGLVTAKKKDSTGICFIGERKFREFLGRYLPAQPGKIITVDGDEIGEHQGLMYHTLGQRKGLGIGGTKEGTEEPWYVVDKDVENNILIVAQGHEHPRLMSVGLIAQQLHWVDREPFTGTMRCTVKTRYRQTDIPCTVKALDDDRIEVIFDEPVAAVTPGQSAVFYNGEVCLGGGIIEQRLPLPI.

Residues 11 to 18 (GMSGGVDS) and M37 each bind ATP. The interval 97 to 99 (NPD) is interaction with target base in tRNA. The Nucleophile role is filled by C102. An intrachain disulfide couples C102 to C199. G127 serves as a coordination point for ATP. Positions 149-151 (KDQ) are interaction with tRNA. The Cysteine persulfide intermediate role is filled by C199. The tract at residues 311–312 (RY) is interaction with tRNA.

The protein belongs to the MnmA/TRMU family. As to quaternary structure, interacts with TusE.

It localises to the cytoplasm. It catalyses the reaction S-sulfanyl-L-cysteinyl-[protein] + uridine(34) in tRNA + AH2 + ATP = 2-thiouridine(34) in tRNA + L-cysteinyl-[protein] + A + AMP + diphosphate + H(+). Catalyzes the 2-thiolation of uridine at the wobble position (U34) of tRNA(Lys), tRNA(Glu) and tRNA(Gln), leading to the formation of s(2)U34, the first step of tRNA-mnm(5)s(2)U34 synthesis. Sulfur is provided by IscS, via a sulfur-relay system. Binds ATP and its substrate tRNAs. The protein is tRNA-specific 2-thiouridylase MnmA of Escherichia coli O157:H7.